The sequence spans 360 residues: tRNA N6-adenosine threonylcarbamoyltransferase (360 aa).

Fe cation-binding residues include H115 and H119. Substrate contacts are provided by residues 137 to 141 (LVSGG), D170, G183, and N283. Residue D311 coordinates Fe cation.

It belongs to the KAE1 / TsaD family. The cofactor is Fe(2+).

It localises to the cytoplasm. The enzyme catalyses L-threonylcarbamoyladenylate + adenosine(37) in tRNA = N(6)-L-threonylcarbamoyladenosine(37) in tRNA + AMP + H(+). Required for the formation of a threonylcarbamoyl group on adenosine at position 37 (t(6)A37) in tRNAs that read codons beginning with adenine. Is involved in the transfer of the threonylcarbamoyl moiety of threonylcarbamoyl-AMP (TC-AMP) to the N6 group of A37, together with TsaE and TsaB. TsaD likely plays a direct catalytic role in this reaction. This chain is tRNA N6-adenosine threonylcarbamoyltransferase, found in Sinorhizobium medicae (strain WSM419) (Ensifer medicae).